Reading from the N-terminus, the 500-residue chain is Trehalose-6-phosphate synthase (500 aa).

Arginine 28 contacts D-glucose 6-phosphate. Residue 48-49 (GG) participates in UDP-alpha-D-glucose binding. Positions 108 and 162 each coordinate D-glucose 6-phosphate. 2 residues coordinate UDP-alpha-D-glucose: arginine 304 and lysine 309. Arginine 342 provides a ligand contact to D-glucose 6-phosphate. 407–411 (LVAKE) is a UDP-alpha-D-glucose binding site.

It belongs to the glycosyltransferase 20 family. In terms of assembly, homotetramer.

It catalyses the reaction ADP-alpha-D-glucose + D-glucose 6-phosphate = alpha,alpha-trehalose 6-phosphate + ADP + H(+). The catalysed reaction is CDP-alpha-D-glucose + D-glucose 6-phosphate = alpha,alpha-trehalose 6-phosphate + CDP + H(+). It carries out the reaction GDP-alpha-D-glucose + D-glucose 6-phosphate = alpha,alpha-trehalose 6-phosphate + GDP + H(+). The enzyme catalyses TDP-alpha-D-glucose + D-glucose 6-phosphate = 5-methyl-UDP + alpha,alpha-trehalose 6-phosphate + H(+). It catalyses the reaction D-glucose 6-phosphate + UDP-alpha-D-glucose = alpha,alpha-trehalose 6-phosphate + UDP + H(+). Its pathway is glycan biosynthesis; trehalose biosynthesis. Functionally, probably involved in the osmoprotection via the biosynthesis of trehalose and in the production of glycogen and alpha-glucan via the TreS-Pep2 branch involved in the biosynthesis of maltose-1-phosphate (M1P). Catalyzes the transfer of glucose from UDP-glucose (UDP-Glc) to D-glucose 6-phosphate (Glc-6-P) to form trehalose-6-phosphate. Probably also able to use ADP-Glc, CDP-Glc, GDP-Glc and TDP-Glc as glucosyl donors. This chain is Trehalose-6-phosphate synthase, found in Mycobacterium tuberculosis (strain CDC 1551 / Oshkosh).